A 210-amino-acid chain; its full sequence is Orotate phosphoribosyltransferase (210 aa).

Residues Arg94, Lys98, His100, and 120 to 128 (EDLISTGGS) each bind 5-phospho-alpha-D-ribose 1-diphosphate. Ser124 is a binding site for orotate.

The protein belongs to the purine/pyrimidine phosphoribosyltransferase family. PyrE subfamily. Homodimer. Mg(2+) serves as cofactor.

The enzyme catalyses orotidine 5'-phosphate + diphosphate = orotate + 5-phospho-alpha-D-ribose 1-diphosphate. The protein operates within pyrimidine metabolism; UMP biosynthesis via de novo pathway; UMP from orotate: step 1/2. Functionally, catalyzes the transfer of a ribosyl phosphate group from 5-phosphoribose 1-diphosphate to orotate, leading to the formation of orotidine monophosphate (OMP). The chain is Orotate phosphoribosyltransferase from Bacillus cereus (strain B4264).